The following is a 135-amino-acid chain: Transcription antitermination protein NusB (135 aa).

The protein belongs to the NusB family.

In terms of biological role, involved in transcription antitermination. Required for transcription of ribosomal RNA (rRNA) genes. Binds specifically to the boxA antiterminator sequence of the ribosomal RNA (rrn) operons. This chain is Transcription antitermination protein NusB, found in Lacticaseibacillus paracasei (strain ATCC 334 / BCRC 17002 / CCUG 31169 / CIP 107868 / KCTC 3260 / NRRL B-441) (Lactobacillus paracasei).